The primary structure comprises 424 residues: Histidine--tRNA ligase (424 aa).

It belongs to the class-II aminoacyl-tRNA synthetase family. As to quaternary structure, homodimer.

It localises to the cytoplasm. The enzyme catalyses tRNA(His) + L-histidine + ATP = L-histidyl-tRNA(His) + AMP + diphosphate + H(+). This chain is Histidine--tRNA ligase, found in Francisella philomiragia subsp. philomiragia (strain ATCC 25017 / CCUG 19701 / FSC 153 / O#319-036).